Consider the following 579-residue polypeptide: Acyl-coenzyme A synthetase ACSM5, mitochondrial (579 aa).

The transit peptide at methionine 1–proline 26 directs the protein to the mitochondrion. Lysine 97 is subject to N6-acetyllysine; alternate. N6-succinyllysine; alternate is present on lysine 97. Residue lysine 152 is modified to N6-acetyllysine. ATP is bound at residue threonine 230–lysine 238. Lysine 303 bears the N6-acetyllysine; alternate mark. An N6-succinyllysine; alternate modification is found at lysine 303. Residues glutamate 368–serine 373, aspartate 455, arginine 470, and lysine 566 contribute to the ATP site.

The protein belongs to the ATP-dependent AMP-binding enzyme family. Requires Mg(2+) as cofactor. The cofactor is Mn(2+). In terms of tissue distribution, detected in kidney and liver.

The protein localises to the mitochondrion matrix. The catalysed reaction is a medium-chain fatty acid + ATP + CoA = a medium-chain fatty acyl-CoA + AMP + diphosphate. In terms of biological role, catalyzes the activation of fatty acids by CoA to produce an acyl-CoA, the first step in fatty acid metabolism. The chain is Acyl-coenzyme A synthetase ACSM5, mitochondrial (ACSM5) from Homo sapiens (Human).